A 92-amino-acid chain; its full sequence is Turripeptide UID-02 (92 aa).

The first 21 residues, 1–21 (MGFYMLLTVALLLTSLMNVEA), serve as a signal peptide directing secretion. Residues 22–39 (TPVDQAERSALEKSGLGN) constitute a propeptide that is removed on maturation.

Expressed by the venom duct.

It localises to the secreted. The chain is Turripeptide UID-02 from Gemmula speciosa (Splendid gem-turris).